The sequence spans 812 residues: Protein FAM83G (812 aa).

A2 is modified (N-acetylalanine). Residues 2 to 312 are DUF1669; that stretch reads AFSQVQCLDD…LYLMSQSVSL (311 aa). S4 carries the post-translational modification Phosphoserine. Positions 76–119 are disordered; the sequence is PGSEDPRVSGRRPEPQDNGGADASEETSAAGGPPATETLPSLEY. The span at 79-90 shows a compositional bias: basic and acidic residues; the sequence is EDPRVSGRRPEP. Phosphoserine occurs at positions 124, 127, and 356. Disordered regions lie at residues 362-389, 455-509, and 521-812; these read KSSSDKQEVTRPPGLRGPAVAERPGDLS, ASAQ…KPRT, and SDIG…HKEP. Over residues 455–467 the composition is skewed to polar residues; that stretch reads ASAQHQLWKQSQG. The span at 471-480 shows a compositional bias: pro residues; the sequence is CPAPCPPPAP. Polar residues predominate over residues 545 to 562; sequence STASESEVPQQQHSSMTQ. Residues 576–586 are compositionally biased toward acidic residues; sequence LDEDEDDDDDY. Residues 589–598 show a composition bias toward low complexity; that stretch reads LSDQDSLSGS. S609, S613, S615, and S649 each carry phosphoserine. Positions 721-731 are enriched in low complexity; it reads SSSKKASPAAA. Over residues 761–772 the composition is skewed to basic and acidic residues; sequence LRAELRATEEHA.

Belongs to the FAM83 family. As to quaternary structure, interacts with SMAD1 (via MH2 domain); in a SMAD4-independent manner. Directly interacts (via DUF1669) with casein kinase isoforms CSNK1A1 and CSNK1A1L. In terms of processing, BMP signaling induces the phosphorylation by BMPR1A at Ser-609, Ser-613 and Ser-615. Phosphorylation at Ser-609 is necessary for the activation of SMAD4-independent BMP target genes such as NEDD9 and ASNS. Post-translationally, phosphorylated by CSNK1A1.

The protein localises to the cytoplasm. It localises to the cytosol. It is found in the nucleus. Its function is as follows. Substrate for type I BMP receptor kinase involved in regulation of some target genes of the BMP signaling pathway. Also regulates the expression of several non-BMP target genes, suggesting a role in other signaling pathways. The protein is Protein FAM83G (Fam83g) of Mus musculus (Mouse).